Here is a 637-residue protein sequence, read N- to C-terminus: Chaperone protein HtpG (637 aa).

Residues methionine 1–arginine 345 are a; substrate-binding. The interval glutamate 346–lysine 562 is b. A c region spans residues leucine 563–lysine 637.

The protein belongs to the heat shock protein 90 family. Homodimer.

The protein resides in the cytoplasm. Molecular chaperone. Has ATPase activity. The chain is Chaperone protein HtpG from Shewanella sp. (strain MR-7).